A 307-amino-acid polypeptide reads, in one-letter code: Ribosomal RNA small subunit methyltransferase H (307 aa).

Residues 32-34, aspartate 52, phenylalanine 78, aspartate 100, and glutamine 107 contribute to the S-adenosyl-L-methionine site; that span reads GGH.

The protein belongs to the methyltransferase superfamily. RsmH family.

Its subcellular location is the cytoplasm. The catalysed reaction is cytidine(1402) in 16S rRNA + S-adenosyl-L-methionine = N(4)-methylcytidine(1402) in 16S rRNA + S-adenosyl-L-homocysteine + H(+). In terms of biological role, specifically methylates the N4 position of cytidine in position 1402 (C1402) of 16S rRNA. The sequence is that of Ribosomal RNA small subunit methyltransferase H from Coxiella burnetii (strain Dugway 5J108-111).